The primary structure comprises 428 residues: Light-independent protochlorophyllide reductase subunit N (428 aa).

C29, C54, and C115 together coordinate [4Fe-4S] cluster.

The protein belongs to the BchN/ChlN family. In terms of assembly, protochlorophyllide reductase is composed of three subunits; BchL, BchN and BchB. Forms a heterotetramer of two BchB and two BchN subunits. Requires [4Fe-4S] cluster as cofactor.

It carries out the reaction chlorophyllide a + oxidized 2[4Fe-4S]-[ferredoxin] + 2 ADP + 2 phosphate = protochlorophyllide a + reduced 2[4Fe-4S]-[ferredoxin] + 2 ATP + 2 H2O. It functions in the pathway porphyrin-containing compound metabolism; bacteriochlorophyll biosynthesis (light-independent). Component of the dark-operative protochlorophyllide reductase (DPOR) that uses Mg-ATP and reduced ferredoxin to reduce ring D of protochlorophyllide (Pchlide) to form chlorophyllide a (Chlide). This reaction is light-independent. The NB-protein (BchN-BchB) is the catalytic component of the complex. The sequence is that of Light-independent protochlorophyllide reductase subunit N from Roseobacter denitrificans (strain ATCC 33942 / OCh 114) (Erythrobacter sp. (strain OCh 114)).